We begin with the raw amino-acid sequence, 321 residues long: Quinol oxidase subunit 2 (321 aa).

The N-terminal stretch at methionine 1–glycine 25 is a signal peptide. A lipid anchor (N-palmitoyl cysteine) is attached at cysteine 26. Cysteine 26 carries S-diacylglycerol cysteine lipidation. 2 helical membrane-spanning segments follow: residues serine 49–valine 69 and threonine 90–proline 110. Positions glutamine 294–glutamate 321 are disordered. The span at serine 300 to glutamate 321 shows a compositional bias: basic and acidic residues.

The protein belongs to the cytochrome c oxidase subunit 2 family.

The protein localises to the cell membrane. The catalysed reaction is 2 a quinol + O2 = 2 a quinone + 2 H2O. Catalyzes quinol oxidation with the concomitant reduction of oxygen to water. Major component for energy conversion during vegetative growth. Subunit II transfers the electrons from a quinol to the binuclear center of the catalytic subunit I. The sequence is that of Quinol oxidase subunit 2 (qoxA) from Bacillus spizizenii (strain ATCC 23059 / NRRL B-14472 / W23) (Bacillus subtilis subsp. spizizenii).